The primary structure comprises 310 residues: Putative S-adenosyl-L-methionine-dependent methyltransferase Mvan_1346 (310 aa).

S-adenosyl-L-methionine-binding positions include D136 and 165-166 (DL).

It belongs to the UPF0677 family.

Its function is as follows. Exhibits S-adenosyl-L-methionine-dependent methyltransferase activity. This is Putative S-adenosyl-L-methionine-dependent methyltransferase Mvan_1346 from Mycolicibacterium vanbaalenii (strain DSM 7251 / JCM 13017 / BCRC 16820 / KCTC 9966 / NRRL B-24157 / PYR-1) (Mycobacterium vanbaalenii).